A 486-amino-acid polypeptide reads, in one-letter code: Cardiolipin synthase A (486 aa).

Helical transmembrane passes span 3 to 23 (TVYTLVSWLAILGYWLLIAGV) and 38 to 58 (MAWLLIIYILPLVGIIAYLAV). 2 PLD phosphodiesterase domains span residues 219–246 (MDLRQHRKMIMIDNYIAYTGSMNMVDPR) and 399–426 (EGGLLHTKSVLVDGELSLVGTVNLDMRS). Residues H224, K226, D231, H404, K406, and D411 contribute to the active site.

It belongs to the phospholipase D family. Cardiolipin synthase subfamily. ClsA sub-subfamily.

Its subcellular location is the cell inner membrane. The enzyme catalyses 2 a 1,2-diacyl-sn-glycero-3-phospho-(1'-sn-glycerol) = a cardiolipin + glycerol. Its function is as follows. Catalyzes the reversible phosphatidyl group transfer from one phosphatidylglycerol molecule to another to form cardiolipin (CL) (diphosphatidylglycerol) and glycerol. The sequence is that of Cardiolipin synthase A from Shigella boydii serotype 4 (strain Sb227).